Consider the following 378-residue polypeptide: Glutamate 5-kinase (378 aa).

ATP is bound at residue Lys17. Positions 58, 145, and 157 each coordinate substrate. Residues 177 to 178 (TD) and 221 to 227 (TGGMMTK) each bind ATP. Residues 286–364 (VGKLYLDSGA…KEIPTILGYV (79 aa)) form the PUA domain.

It belongs to the glutamate 5-kinase family.

It is found in the cytoplasm. It carries out the reaction L-glutamate + ATP = L-glutamyl 5-phosphate + ADP. It participates in amino-acid biosynthesis; L-proline biosynthesis; L-glutamate 5-semialdehyde from L-glutamate: step 1/2. In terms of biological role, catalyzes the transfer of a phosphate group to glutamate to form L-glutamate 5-phosphate. The sequence is that of Glutamate 5-kinase from Nostoc sp. (strain PCC 7120 / SAG 25.82 / UTEX 2576).